The chain runs to 178 residues: Large ribosomal subunit protein uL6 (178 aa).

It belongs to the universal ribosomal protein uL6 family. Part of the 50S ribosomal subunit.

Its function is as follows. This protein binds to the 23S rRNA, and is important in its secondary structure. It is located near the subunit interface in the base of the L7/L12 stalk, and near the tRNA binding site of the peptidyltransferase center. This is Large ribosomal subunit protein uL6 from Exiguobacterium sibiricum (strain DSM 17290 / CCUG 55495 / CIP 109462 / JCM 13490 / 255-15).